A 70-amino-acid chain; its full sequence is Protein SlyX homolog (70 aa).

This sequence belongs to the SlyX family.

The sequence is that of Protein SlyX homolog from Pseudoalteromonas atlantica (strain T6c / ATCC BAA-1087).